A 965-amino-acid polypeptide reads, in one-letter code: Isoleucine--tRNA ligase (965 aa).

The 'HIGH' region motif lies at 68–78; sequence PYANGSLHMGH. E582 contacts L-isoleucyl-5'-AMP. The short motif at 623–627 is the 'KMSKS' region element; it reads KMSKS. K626 serves as a coordination point for ATP. The Zn(2+) site is built by C936, C939, C956, and C959.

The protein belongs to the class-I aminoacyl-tRNA synthetase family. IleS type 1 subfamily. In terms of assembly, monomer. It depends on Zn(2+) as a cofactor.

Its subcellular location is the cytoplasm. The catalysed reaction is tRNA(Ile) + L-isoleucine + ATP = L-isoleucyl-tRNA(Ile) + AMP + diphosphate. Catalyzes the attachment of isoleucine to tRNA(Ile). As IleRS can inadvertently accommodate and process structurally similar amino acids such as valine, to avoid such errors it has two additional distinct tRNA(Ile)-dependent editing activities. One activity is designated as 'pretransfer' editing and involves the hydrolysis of activated Val-AMP. The other activity is designated 'posttransfer' editing and involves deacylation of mischarged Val-tRNA(Ile). The sequence is that of Isoleucine--tRNA ligase from Prochlorococcus marinus (strain MIT 9515).